Here is a 245-residue protein sequence, read N- to C-terminus: 1-(5-phosphoribosyl)-5-[(5-phosphoribosylamino)methylideneamino] imidazole-4-carboxamide isomerase (245 aa).

The active-site Proton acceptor is aspartate 12. Aspartate 131 serves as the catalytic Proton donor.

It belongs to the HisA/HisF family.

The protein localises to the cytoplasm. The catalysed reaction is 1-(5-phospho-beta-D-ribosyl)-5-[(5-phospho-beta-D-ribosylamino)methylideneamino]imidazole-4-carboxamide = 5-[(5-phospho-1-deoxy-D-ribulos-1-ylimino)methylamino]-1-(5-phospho-beta-D-ribosyl)imidazole-4-carboxamide. It participates in amino-acid biosynthesis; L-histidine biosynthesis; L-histidine from 5-phospho-alpha-D-ribose 1-diphosphate: step 4/9. This chain is 1-(5-phosphoribosyl)-5-[(5-phosphoribosylamino)methylideneamino] imidazole-4-carboxamide isomerase, found in Thermobifida fusca (strain YX).